A 411-amino-acid polypeptide reads, in one-letter code: Putative BMP-2-inducible kinase-like protein (411 aa).

3 disordered regions span residues 1-87, 215-280, and 392-411; these read MIAP…TQDI, SQQQ…RVSQ, and QQSQPVELDPFGAAPFPSKQ. Basic and acidic residues-rich tracts occupy residues 8–18 and 53–68; these read SSEEEGQKDEE and EKRSSDSDYEQAKAKY. Residues 47-71 are a coiled coil; it reads EDEEEEEKRSSDSDYEQAKAKYSDM. Basic residues-rich tracts occupy residues 220 to 234 and 243 to 258; these read VKQRSLQKLSSRQRR and NGKRHHGTPTSKKKTL.

This is Putative BMP-2-inducible kinase-like protein (BMP2KL) from Homo sapiens (Human).